The chain runs to 278 residues: BPI fold-containing family A member 1 (278 aa).

Residues 1-19 (MFLVGSLVVLCGLLAHSTA) form the signal peptide. Repeat repeat units lie at residues 23–28 (GLPLPL), 30–36 (QGPPLPL), 39–44 (GPPLPL), and 47–52 (GQLLPL). Residues 23-52 (GLPLPLGQGPPLPLNQGPPLPLNQGQLLPL) are 4 X 6 AA repeats of G-[LPQ]-[PL]-L-P-L. Residues 112–117 (LVGGLL) form an important for surfactant activity and antibacterial properties region. N-linked (GlcNAc...) asparagine glycosylation is found at N182 and N228. A disulfide bond links C204 and C246.

This sequence belongs to the BPI/LBP/Plunc superfamily. Plunc family. In terms of assembly, monomer. Interacts (via N-terminus) with SCNN1B, a subunit of the heterotrimeric epithelial sodium channel (ENaC); this inhibits proteolytic activation of ENaC. Detected in airway epithelia (trachea and lung) and in bronchoalveolar fluid (at protein level). Upper airways, nasopharyngeal epithelium and thymus. Highest expression in the trachea and progressive decrease from proximal (bronchial) to distal (bronchiolar) airways. No expression is detected in the terminal bronchioles, respiratory bronchioles or lung alveoli.

The protein resides in the secreted. Lipid-binding protein which shows high specificity for the surfactant phospholipid dipalmitoylphosphatidylcholine (DPPC). Plays a role in the innate immune responses of the upper airways. Reduces the surface tension in secretions from airway epithelia and inhibits the formation of biofilm by pathogenic Gram-negative bacteria, such as P.aeruginosa and K.pneumoniae. Negatively regulates proteolytic cleavage of SCNN1G, an event that is required for activation of the epithelial sodium channel (ENaC), and thereby contributes to airway surface liquid homeostasis and proper clearance of mucus. Plays a role in the airway inflammatory response after exposure to irritants. May attract macrophages and neutrophils. The chain is BPI fold-containing family A member 1 (Bpifa1) from Mus musculus (Mouse).